We begin with the raw amino-acid sequence, 108 residues long: UPF0235 protein MM_0822 (108 aa).

This sequence belongs to the UPF0235 family.

The sequence is that of UPF0235 protein MM_0822 from Methanosarcina mazei (strain ATCC BAA-159 / DSM 3647 / Goe1 / Go1 / JCM 11833 / OCM 88) (Methanosarcina frisia).